The chain runs to 399 residues: MATASSSDDAGAAMSISIANSSKRPIATTKTAASIPPYATLAFGALSGFASCVLLQPFDLLKTRLQQLDHRPLSPVSNKSISKPQYASRTQKLVAITKDIVHTHGYQGLWRGTAPTVIRNVPGVALYFYSVSHLRSVASQRQIPLISVAIPSDASSNTSTLAKLSTTGNLLTGAVARVTVGFILSPVTVVKARFESSNFSAATERTLLSSMREIRAQSGFRGFFQGFTATALRDAPYAGLYLALYEACKTNLAGLSRSMDGGLGTGNWMVVSASGLLAGTLATLLTHPFDIIKTRMQTTPADTLHQIALAHDPKSTLSPSVLRDSLKPSVWGMTKHLWASSGPRALLDGLGLRCARKAASSAIGWSIFERGRSWYTEREASSSAQEAGTGTRLLDHKQV.

3 Solcar repeats span residues 35–137 (IPPY…LRSV), 164–251 (LSTT…CKTN), and 266–374 (GNWM…GRSW). Transmembrane regions (helical) follow at residues 41–66 (LAFG…TRLQ), 112–138 (GTAP…RSVA), 170–195 (LLTG…ARFE), 226–249 (GFTA…EACK), 270–296 (VVSA…KTRM), and 349–367 (GLGL…GWSI). The interval 379–399 (EASSSAQEAGTGTRLLDHKQV) is disordered.

This sequence belongs to the mitochondrial carrier (TC 2.A.29) family. SLC25A38 subfamily.

It is found in the mitochondrion inner membrane. It carries out the reaction glycine(in) = glycine(out). Mitochondrial glycine transporter that imports glycine into the mitochondrial matrix. Plays an important role in providing glycine for the first enzymatic step in heme biosynthesis, the condensation of glycine with succinyl-CoA to produce 5-aminolevulinate (ALA) in the mitochondrial matrix. The protein is Mitochondrial glycine transporter of Mycosarcoma maydis (Corn smut fungus).